The sequence spans 578 residues: Thiol:disulfide interchange protein DsbD (578 aa).

The signal sequence occupies residues 1–24; it reads MAQRFITLILLLCSILLAPHSAQA. Cystine bridges form between Cys-134–Cys-140 and Cys-195–Cys-317. The next 9 membrane-spanning stretches (helical) occupy residues 183–203, 219–239, 256–276, 297–317, 318–338, 339–359, 370–390, 397–417, and 421–441; these read ALLIGIGIAFTPCVLPMYPLI, ILLLAIVYVQGMALTYTLLGL, YVLIGLSALFVLLALSMFGLY, GGSLAGVFAMGALAGLICSPC, TTAPLSAILLYIAQSGNMLAG, GGTLYLYALGMGIPLVIVTLF, WMQYVKEAFGFVILALPVFLL, VWGLRLWSLLAIAFFGWAFIL, and AHSGWARAFQLLLLAALLIAA. Residues 438–578 form the Thioredoxin domain; that stretch reads LIAARPLQDW…FLQHLQNLPR (141 aa). An intrachain disulfide couples Cys-493 to Cys-496.

The protein belongs to the thioredoxin family. DsbD subfamily.

It localises to the cell inner membrane. It carries out the reaction [protein]-dithiol + NAD(+) = [protein]-disulfide + NADH + H(+). The enzyme catalyses [protein]-dithiol + NADP(+) = [protein]-disulfide + NADPH + H(+). Required to facilitate the formation of correct disulfide bonds in some periplasmic proteins and for the assembly of the periplasmic c-type cytochromes. Acts by transferring electrons from cytoplasmic thioredoxin to the periplasm. This transfer involves a cascade of disulfide bond formation and reduction steps. This Yersinia enterocolitica serotype O:8 / biotype 1B (strain NCTC 13174 / 8081) protein is Thiol:disulfide interchange protein DsbD.